Consider the following 285-residue polypeptide: MARCO-like protein (285 aa).

The first 20 residues, methionine 1–threonine 20, serve as a signal peptide directing secretion. Asparagine 24 carries an N-linked (GlcNAc...) asparagine glycan. Disordered regions lie at residues asparagine 47–glycine 77 and glycine 91–leucine 285. Polar residues-rich tracts occupy residues lysine 57–proline 67 and serine 105–proline 114. Over residues glutamate 115–glutamine 128 the composition is skewed to low complexity. Over residues isoleucine 134–aspartate 145 the composition is skewed to polar residues. The span at glycine 160–glutamine 173 shows a compositional bias: low complexity. A compositionally biased stretch (polar residues) spans histidine 174–asparagine 185. The span at leucine 186–glycine 220 shows a compositional bias: low complexity. The segment covering asparagine 221 to leucine 285 has biased composition (polar residues).

The protein is MARCO-like protein of Homo sapiens (Human).